We begin with the raw amino-acid sequence, 147 residues long: Hemoglobin subunit beta (147 aa).

The region spanning 2–147 is the Globin domain; that stretch reads DWTDAERAAI…VVSALGRQYH (146 aa). Positions 63 and 92 each coordinate heme b.

This sequence belongs to the globin family. Heterotetramer of two alpha chains and two beta chains. Red blood cells.

In terms of biological role, involved in oxygen transport from gills to the various peripheral tissues. The sequence is that of Hemoglobin subunit beta (hbb) from Leiostomus xanthurus (Spot).